The chain runs to 222 residues: Histidinol-phosphatase (222 aa).

Asp-8 functions as the Nucleophile in the catalytic mechanism. Mg(2+) is bound by residues Asp-8, Asp-10, and Asp-184. Residue Asp-10 is the Proton donor of the active site.

This sequence belongs to the HAD-like hydrolase superfamily. SerB family. The cofactor is Mg(2+).

The enzyme catalyses L-histidinol phosphate + H2O = L-histidinol + phosphate. The protein operates within amino-acid biosynthesis; L-histidine biosynthesis; L-histidine from 5-phospho-alpha-D-ribose 1-diphosphate: step 8/9. Its function is as follows. Catalyzes the dephosphorylation of histidinol-phosphate to histidinol, the direct precursor of histidine. The sequence is that of Histidinol-phosphatase from Neisseria meningitidis serogroup C (strain 8013).